A 294-amino-acid polypeptide reads, in one-letter code: Bifunctional protein FolD (294 aa).

Residues 166–168, Ser191, and Ile232 contribute to the NADP(+) site; that span reads GRS.

It belongs to the tetrahydrofolate dehydrogenase/cyclohydrolase family. As to quaternary structure, homodimer.

It carries out the reaction (6R)-5,10-methylene-5,6,7,8-tetrahydrofolate + NADP(+) = (6R)-5,10-methenyltetrahydrofolate + NADPH. The enzyme catalyses (6R)-5,10-methenyltetrahydrofolate + H2O = (6R)-10-formyltetrahydrofolate + H(+). Its pathway is one-carbon metabolism; tetrahydrofolate interconversion. Catalyzes the oxidation of 5,10-methylenetetrahydrofolate to 5,10-methenyltetrahydrofolate and then the hydrolysis of 5,10-methenyltetrahydrofolate to 10-formyltetrahydrofolate. In Afipia carboxidovorans (strain ATCC 49405 / DSM 1227 / KCTC 32145 / OM5) (Oligotropha carboxidovorans), this protein is Bifunctional protein FolD.